Reading from the N-terminus, the 119-residue chain is Large ribosomal subunit protein bL20 (119 aa).

It belongs to the bacterial ribosomal protein bL20 family.

Functionally, binds directly to 23S ribosomal RNA and is necessary for the in vitro assembly process of the 50S ribosomal subunit. It is not involved in the protein synthesizing functions of that subunit. This is Large ribosomal subunit protein bL20 from Alkaliphilus metalliredigens (strain QYMF).